We begin with the raw amino-acid sequence, 63 residues long: Cecropin-A1 (63 aa).

Positions 1 to 19 (MNFYNIFVFVALILAITIG) are cleaved as a signal peptide. An Arginine amide modification is found at R62.

It belongs to the cecropin family.

It is found in the secreted. Its function is as follows. Cecropins have lytic and antibacterial activity against several Gram-positive and Gram-negative bacteria. The protein is Cecropin-A1 (CecA1) of Drosophila simulans (Fruit fly).